Consider the following 184-residue polypeptide: NADH-quinone oxidoreductase subunit B (184 aa).

The [4Fe-4S] cluster site is built by C63, C64, C128, and C158.

It belongs to the complex I 20 kDa subunit family. NDH-1 is composed of 14 different subunits. Subunits NuoB, C, D, E, F, and G constitute the peripheral sector of the complex. [4Fe-4S] cluster serves as cofactor.

The protein localises to the cell inner membrane. The enzyme catalyses a quinone + NADH + 5 H(+)(in) = a quinol + NAD(+) + 4 H(+)(out). Its function is as follows. NDH-1 shuttles electrons from NADH, via FMN and iron-sulfur (Fe-S) centers, to quinones in the respiratory chain. The immediate electron acceptor for the enzyme in this species is believed to be ubiquinone. Couples the redox reaction to proton translocation (for every two electrons transferred, four hydrogen ions are translocated across the cytoplasmic membrane), and thus conserves the redox energy in a proton gradient. The chain is NADH-quinone oxidoreductase subunit B from Xylella fastidiosa (strain M23).